We begin with the raw amino-acid sequence, 324 residues long: tRNA dimethylallyltransferase (324 aa).

20-27 (GPTASGKS) lines the ATP pocket. 22-27 (TASGKS) is a substrate binding site. Interaction with substrate tRNA regions lie at residues 45 to 48 (DSAL), 168 to 172 (QRLIR), and 284 to 291 (KRQITWLR).

Belongs to the IPP transferase family. In terms of assembly, monomer. Mg(2+) is required as a cofactor.

The enzyme catalyses adenosine(37) in tRNA + dimethylallyl diphosphate = N(6)-dimethylallyladenosine(37) in tRNA + diphosphate. In terms of biological role, catalyzes the transfer of a dimethylallyl group onto the adenine at position 37 in tRNAs that read codons beginning with uridine, leading to the formation of N6-(dimethylallyl)adenosine (i(6)A). In Hydrogenovibrio crunogenus (strain DSM 25203 / XCL-2) (Thiomicrospira crunogena), this protein is tRNA dimethylallyltransferase.